A 344-amino-acid polypeptide reads, in one-letter code: Dihydroorotase (344 aa).

Zn(2+)-binding residues include H13 and H15. Substrate-binding positions include 15 to 17 (HLR) and N41. Residues K99, H136, and H174 each contribute to the Zn(2+) site. K99 carries the post-translational modification N6-carboxylysine. H136 lines the substrate pocket. L219 contributes to the substrate binding site. D247 is a Zn(2+) binding site. Residue D247 is part of the active site. Positions 251 and 263 each coordinate substrate.

This sequence belongs to the metallo-dependent hydrolases superfamily. DHOase family. Class II DHOase subfamily. As to quaternary structure, homodimer. Zn(2+) serves as cofactor.

The enzyme catalyses (S)-dihydroorotate + H2O = N-carbamoyl-L-aspartate + H(+). It functions in the pathway pyrimidine metabolism; UMP biosynthesis via de novo pathway; (S)-dihydroorotate from bicarbonate: step 3/3. Functionally, catalyzes the reversible cyclization of carbamoyl aspartate to dihydroorotate. The sequence is that of Dihydroorotase from Acinetobacter baylyi (strain ATCC 33305 / BD413 / ADP1).